The primary structure comprises 227 residues: Ribonuclease 3 (227 aa).

The 128-residue stretch at 3–130 (TNAISKIIKY…LIGAIYLDGG (128 aa)) folds into the RNase III domain. E43 contributes to the Mg(2+) binding site. Residue D47 is part of the active site. Positions 116 and 119 each coordinate Mg(2+). The active site involves E119. The DRBM domain occupies 155–224 (DAKTILQEWA…ASLMLAKINY (70 aa)).

Belongs to the ribonuclease III family. Homodimer. It depends on Mg(2+) as a cofactor.

It is found in the cytoplasm. It catalyses the reaction Endonucleolytic cleavage to 5'-phosphomonoester.. Digests double-stranded RNA. Involved in the processing of primary rRNA transcript to yield the immediate precursors to the large and small rRNAs (23S and 16S). Processes some mRNAs, and tRNAs when they are encoded in the rRNA operon. Processes pre-crRNA and tracrRNA of type II CRISPR loci if present in the organism. The polypeptide is Ribonuclease 3 (Ehrlichia ruminantium (strain Welgevonden)).